The sequence spans 1562 residues: Cell surface antigen I/II (1562 aa).

The signal sequence occupies residues 1–38; sequence MKVKKTYGFRKSKISKTLCGAVLGTVAAVSVAGQKVFA. Low complexity predominate over residues 42 to 54; the sequence is TTTSDVDTKVVGT. The interval 42–91 is disordered; that stretch reads TTTSDVDTKVVGTQTGNPATNLPEAQGSASKEAEQSQNQAGETNGSIPVE. A helical region spans residues 60-551; sequence ATNLPEAQGS…SKAKYDQKIL (492 aa). Polar residues predominate over residues 76 to 87; sequence QSQNQAGETNGS. 4 Ag I/II A repeats span residues 147-221, 222-303, 304-385, and 386-467; these read KKTT…QKTN, AANQ…QEAN, AANE…KKAN, and AANE…QKDL. Disordered stretches follow at residues 824–973 and 1482–1509; these read VPKV…PTDP and SNTVKTTTPEDPTDPTDPQDPSSPRTST. Pro residues predominate over residues 943–958; it reads PTPPTPTPDQPEPNKP. A compositionally biased stretch (low complexity) spans 1500–1509; the sequence is QDPSSPRTST. An LPXTG sorting signal motif is present at residues 1529-1533; sequence LPNTG. Thr-1532 carries the pentaglycyl murein peptidoglycan amidated threonine modification. Positions 1533–1562 are cleaved as a propeptide — removed by sortase; it reads GVTNNAYMPLLGIIGLVTSFSLLGLKAKKD.

It belongs to the antigen I/II family. In terms of processing, detected as a 185 kDa cell surface protein, but also as 2 proteins in S.mutans culture supernatants of about 150 kDa (antigen I) and 50 kDa (antigen II); antigen II is only seen after proteolysis. Antigen I and II have the same N-terminus but different C-termini.

It is found in the secreted. Its subcellular location is the cell wall. In terms of biological role, surface protein antigen implicated in dental caries. The polypeptide is Cell surface antigen I/II (Streptococcus mutans serotype c (strain ATCC 700610 / UA159)).